The chain runs to 926 residues: Alanine--tRNA ligase (926 aa).

Residues His-577, His-581, Cys-680, and His-684 each contribute to the Zn(2+) site.

This sequence belongs to the class-II aminoacyl-tRNA synthetase family. It depends on Zn(2+) as a cofactor.

Its subcellular location is the cytoplasm. The enzyme catalyses tRNA(Ala) + L-alanine + ATP = L-alanyl-tRNA(Ala) + AMP + diphosphate. In terms of biological role, catalyzes the attachment of alanine to tRNA(Ala) in a two-step reaction: alanine is first activated by ATP to form Ala-AMP and then transferred to the acceptor end of tRNA(Ala). Also edits incorrectly charged Ser-tRNA(Ala) and Gly-tRNA(Ala) via its editing domain. This chain is Alanine--tRNA ligase, found in Methylacidiphilum infernorum (isolate V4) (Methylokorus infernorum (strain V4)).